The sequence spans 147 residues: Lysozyme C (147 aa).

An N-terminal signal peptide occupies residues 1 to 18 (MKVLLLLGFIFCSMAAHG). Residues 19–147 (KRMERCEFAR…LSKYLEGCHL (129 aa)) enclose the C-type lysozyme domain. Cystine bridges form between cysteine 24-cysteine 145, cysteine 48-cysteine 133, cysteine 83-cysteine 99, and cysteine 95-cysteine 113. Catalysis depends on residues glutamate 53 and aspartate 71.

It belongs to the glycosyl hydrolase 22 family. As to quaternary structure, monomer.

Its subcellular location is the secreted. It catalyses the reaction Hydrolysis of (1-&gt;4)-beta-linkages between N-acetylmuramic acid and N-acetyl-D-glucosamine residues in a peptidoglycan and between N-acetyl-D-glucosamine residues in chitodextrins.. In terms of biological role, lysozymes have primarily a bacteriolytic function; those in tissues and body fluids are associated with the monocyte-macrophage system and enhance the activity of immunoagents. This is Lysozyme C (LYZ) from Trichosurus vulpecula (Brush-tailed possum).